The primary structure comprises 622 residues: 1-deoxy-D-xylulose-5-phosphate synthase (622 aa).

Thiamine diphosphate is bound by residues His74 and 115 to 117 (GHS). Mg(2+) is bound at residue Asp146. Residues 147–148 (GA), Asn175, Tyr286, and Glu366 contribute to the thiamine diphosphate site. Asn175 contributes to the Mg(2+) binding site.

Belongs to the transketolase family. DXPS subfamily. Homodimer. Mg(2+) serves as cofactor. It depends on thiamine diphosphate as a cofactor.

The catalysed reaction is D-glyceraldehyde 3-phosphate + pyruvate + H(+) = 1-deoxy-D-xylulose 5-phosphate + CO2. It functions in the pathway metabolic intermediate biosynthesis; 1-deoxy-D-xylulose 5-phosphate biosynthesis; 1-deoxy-D-xylulose 5-phosphate from D-glyceraldehyde 3-phosphate and pyruvate: step 1/1. Functionally, catalyzes the acyloin condensation reaction between C atoms 2 and 3 of pyruvate and glyceraldehyde 3-phosphate to yield 1-deoxy-D-xylulose-5-phosphate (DXP). In Carboxydothermus hydrogenoformans (strain ATCC BAA-161 / DSM 6008 / Z-2901), this protein is 1-deoxy-D-xylulose-5-phosphate synthase.